Reading from the N-terminus, the 115-residue chain is MASVKQTNKTLREGNPEHSTIFYIRGSILAPSYFLPDFARTLFPRKDMVSVGPLFPIIFAHSDSAAIDMSGTTGKRRCLVVVAAPIVDILISNRTSCTKSCASAARPCLEGSVAP.

This is an uncharacterized protein from Saccharomyces cerevisiae (strain ATCC 204508 / S288c) (Baker's yeast).